A 111-amino-acid polypeptide reads, in one-letter code: Photosystem II reaction center Psb28 protein (111 aa).

The protein belongs to the Psb28 family. As to quaternary structure, part of the photosystem II complex.

It localises to the cellular thylakoid membrane. In Trichormus variabilis (strain ATCC 29413 / PCC 7937) (Anabaena variabilis), this protein is Photosystem II reaction center Psb28 protein.